Here is a 145-residue protein sequence, read N- to C-terminus: Putative antiporter subunit mnhG2 (145 aa).

3 helical membrane passes run 11-31 (IAAV…IGIV), 51-71 (VLLT…FFSV), and 72-92 (RLLL…HLVA).

The protein belongs to the CPA3 antiporters (TC 2.A.63) subunit G family. In terms of assembly, may form a heterooligomeric complex that consists of seven subunits: mnhA2, mnhB2, mnhC2, mnhD2, mnhE2, mnhF2 and mnhG2.

Its subcellular location is the cell membrane. In Staphylococcus aureus (strain COL), this protein is Putative antiporter subunit mnhG2 (mnhG2).